The following is a 162-amino-acid chain: MNVPFRVGQGYDVHALVAGRPLIIGGVTIPHTHGLQGHSDADVLLHAVTDALLGAAGLGDIGRHFPDTDPAYRGADSRVLLRDAVAKVRAAGWAPVNIDATVHAQAPKIGPHAGAMVANIAADAGIDSASVNIKAKTNEGLGYLGRKEGIAATVVALLARAS.

D12 and H14 together coordinate a divalent metal cation. 4-CDP-2-C-methyl-D-erythritol 2-phosphate is bound by residues 12-14 (DVH) and 38-39 (HS). H46 serves as a coordination point for a divalent metal cation. 4-CDP-2-C-methyl-D-erythritol 2-phosphate is bound by residues 60–62 (DIG), 65–69 (FPDTD), and R146.

The protein belongs to the IspF family. As to quaternary structure, homotrimer. Requires a divalent metal cation as cofactor.

The catalysed reaction is 4-CDP-2-C-methyl-D-erythritol 2-phosphate = 2-C-methyl-D-erythritol 2,4-cyclic diphosphate + CMP. The protein operates within isoprenoid biosynthesis; isopentenyl diphosphate biosynthesis via DXP pathway; isopentenyl diphosphate from 1-deoxy-D-xylulose 5-phosphate: step 4/6. In terms of biological role, involved in the biosynthesis of isopentenyl diphosphate (IPP) and dimethylallyl diphosphate (DMAPP), two major building blocks of isoprenoid compounds. Catalyzes the conversion of 4-diphosphocytidyl-2-C-methyl-D-erythritol 2-phosphate (CDP-ME2P) to 2-C-methyl-D-erythritol 2,4-cyclodiphosphate (ME-CPP) with a corresponding release of cytidine 5-monophosphate (CMP). This Bordetella petrii (strain ATCC BAA-461 / DSM 12804 / CCUG 43448) protein is 2-C-methyl-D-erythritol 2,4-cyclodiphosphate synthase.